We begin with the raw amino-acid sequence, 187 residues long: Probable chorismate pyruvate-lyase (187 aa).

Substrate-binding residues include Arg-80, Leu-117, and Glu-176.

It belongs to the UbiC family.

Its subcellular location is the cytoplasm. It carries out the reaction chorismate = 4-hydroxybenzoate + pyruvate. It participates in cofactor biosynthesis; ubiquinone biosynthesis. Removes the pyruvyl group from chorismate, with concomitant aromatization of the ring, to provide 4-hydroxybenzoate (4HB) for the ubiquinone pathway. This chain is Probable chorismate pyruvate-lyase, found in Halorhodospira halophila (strain DSM 244 / SL1) (Ectothiorhodospira halophila (strain DSM 244 / SL1)).